Reading from the N-terminus, the 140-residue chain is 3-hydroxyacyl-[acyl-carrier-protein] dehydratase FabZ (140 aa).

The active site involves His47.

It belongs to the thioester dehydratase family. FabZ subfamily.

It localises to the cytoplasm. It catalyses the reaction a (3R)-hydroxyacyl-[ACP] = a (2E)-enoyl-[ACP] + H2O. Involved in unsaturated fatty acids biosynthesis. Catalyzes the dehydration of short chain beta-hydroxyacyl-ACPs and long chain saturated and unsaturated beta-hydroxyacyl-ACPs. The protein is 3-hydroxyacyl-[acyl-carrier-protein] dehydratase FabZ of Streptococcus suis (strain 98HAH33).